Reading from the N-terminus, the 297-residue chain is Protoheme IX farnesyltransferase 1 (297 aa).

The next 9 membrane-spanning stretches (helical) occupy residues 23 to 43 (VVVLMLITSLVGMFLATRAGV), 45 to 65 (WSVLLFGNLGIALCAGGAAAV), 93 to 113 (LPALLFALALALLGMALLLMF), 117 to 137 (LTAWLTLASLLGYAVLYTGFL), 145 to 165 (IVIGGLAGAAPPLLGWVAVSG), 171 to 191 (PLLLVLIIFAWTPPHFWALAI), 216 to 236 (LHILLYTLILLAVTLLPYAIH), 241 to 261 (LYLVCALALGLRFLQWAWVLY), and 277 to 297 (IGYLFALFIALLVDHYLLLNL).

It belongs to the UbiA prenyltransferase family. Protoheme IX farnesyltransferase subfamily.

Its subcellular location is the cell inner membrane. It catalyses the reaction heme b + (2E,6E)-farnesyl diphosphate + H2O = Fe(II)-heme o + diphosphate. The protein operates within porphyrin-containing compound metabolism; heme O biosynthesis; heme O from protoheme: step 1/1. Its function is as follows. Converts heme B (protoheme IX) to heme O by substitution of the vinyl group on carbon 2 of heme B porphyrin ring with a hydroxyethyl farnesyl side group. The polypeptide is Protoheme IX farnesyltransferase 1 (Pseudomonas putida (strain W619)).